The chain runs to 549 residues: Adhesion G protein-coupled receptor G3 (549 aa).

The signal sequence occupies residues 1 to 20; sequence MATPRGLGALLLLLLLPTSG. Residues 21–270 are Extracellular-facing; sequence QEKPTEGPRN…DQSTVHILTR (250 aa). Residues N98, N144, and N210 are each glycosylated (N-linked (GlcNAc...) asparagine). Residues 107–262 enclose the GAIN-B domain; it reads FYFSLEPSQV…ALLLRPTLDQ (156 aa). 2 cysteine pairs are disulfide-bonded: C215-C244 and C233-C246. Positions 215-262 are GPS; it reads CVFWDVTKGTTGDWSSEGCSTEVRPEGTVCCCDHLTFFALLLRPTLDQ. The tract at residues 251–259 is stachel; it reads FFALLLRPT. Residues 271–295 traverse the membrane as a helical segment; that stretch reads ISQAGCGVSMIFLAFTIILYAFLRL. Residues 296–304 lie on the Cytoplasmic side of the membrane; it reads SRERFKSED. The chain crosses the membrane as a helical span at residues 305–326; sequence APKIHVALGGSLFLLNLAFLVN. Residues 327–338 are Extracellular-facing; that stretch reads VGSGSKGSDAAC. Cysteines 338 and 420 form a disulfide. A helical transmembrane segment spans residues 339-364; that stretch reads WARGAVFHYFLLCAFTWMGLEAFHLY. The Cytoplasmic segment spans residues 365-378; sequence LLAVRVFNTYFGHY. The helical transmembrane segment at 379 to 400 threads the bilayer; it reads FLKLSLVGWGLPALMVIGTGSA. The Extracellular segment spans residues 401–428; sequence NSYGLYTIRDRENRTSLELCWFREGTTM. N-linked (GlcNAc...) asparagine glycosylation occurs at N413. A helical membrane pass occupies residues 429 to 454; sequence YALYITVHGYFLITFLFGMVVLALVV. Over 455 to 474 the chain is Cytoplasmic; sequence WKIFTLSRATAVKERGKNRK. The helical transmembrane segment at 475-495 threads the bilayer; it reads KVLTLLGLSSLVGVTWGLAIF. Over 496-501 the chain is Extracellular; the sequence is TPLGLS. Residues 502-525 traverse the membrane as a helical segment; that stretch reads TVYIFALFNSLQGVFICCWFTILY. N510 serves as a coordination point for cortisol. At 526 to 549 the chain is on the cytoplasmic side; the sequence is LPSQSTTVSSSTARLDQAHSASQE.

Belongs to the G-protein coupled receptor 2 family. Adhesion G-protein coupled receptor (ADGR) subfamily. As to quaternary structure, heterodimer of 2 chains generated by proteolytic processing; the large extracellular N-terminal fragment and the membrane-bound C-terminal fragment predominantly remain associated and non-covalently linked. Interacts with PRTN3; this interaction induces the activation of PAR2. Interacts with GNAO1 (when palmitoylated). Post-translationally, autoproteolytically processed at the GPS region of the GAIN-B domain; this cleavage modulates receptor activity. In terms of processing, O- and N-glycosylated. As to expression, expressed in cultured primary dermal lymphatic endothelial cells. Highly expressed in polymorphonuclear cells (PMNs) including neutrophilic, eosinophilic, and basophilic granulocytes.

Its subcellular location is the cell membrane. Forms a heterodimer of 2 chains generated by proteolytic processing that remain associated through non-covalent interactions mediated by the GAIN-B domain. In the inactivated receptor, the Stachel sequence (also named stalk) is embedded in the GAIN-B domain, where it adopts a beta-strand conformation. On activation, the Stachel moves into the 7 transmembrane region and adopts a twisted hook-shaped configuration that forms contacts within the receptor, leading to coupling of a G-alpha protein, which activates signaling. The cleaved GAIN-B and N-terminal domains can then dissociate from the rest of the receptor. In terms of biological role, adhesion G-protein coupled receptor (aGPCR) for glucocorticoid hormones such as cortisol, cortisone and 11-deoxycortisol. Ligand binding causes a conformation change that triggers signaling via guanine nucleotide-binding proteins (G proteins) and modulates the activity of downstream effectors, such as adenylate cyclase. ADGRG3/GPR97 is coupled to G(o)/GNAO1 G proteins and mediates signaling by inhibiting adenylate cyclase activity. May also signal through G-alpha(q)-proteins; additional evidence are however required to confirm this result in vivo. Plays a role in the regulation of various processes including B-cell development, inflammation or innate immunity. Regulates migration of lymphatic endothelial cells in vitro via the small GTPases RhoA and CDC42. Antibody ligation leads to the production and activation of antimicrobial mediators like reactive oxygen species (ROS) and myeloperoxidase (MPO) as well as enhanced bacteria uptake and killing by granulocytes. Additionally, collaborates with protease-activated receptor 2/PAR2 to stimulate neutrophil-driven antimicrobial responses and endothelial cell activation. In Homo sapiens (Human), this protein is Adhesion G protein-coupled receptor G3.